Reading from the N-terminus, the 362-residue chain is Phospho-2-dehydro-3-deoxyheptonate aldolase (362 aa).

The protein belongs to the class-I DAHP synthase family.

The catalysed reaction is D-erythrose 4-phosphate + phosphoenolpyruvate + H2O = 7-phospho-2-dehydro-3-deoxy-D-arabino-heptonate + phosphate. It participates in metabolic intermediate biosynthesis; chorismate biosynthesis; chorismate from D-erythrose 4-phosphate and phosphoenolpyruvate: step 1/7. In terms of biological role, stereospecific condensation of phosphoenolpyruvate (PEP) and D-erythrose-4-phosphate (E4P) giving rise to 3-deoxy-D-arabino-heptulosonate-7-phosphate (DAHP). This chain is Phospho-2-dehydro-3-deoxyheptonate aldolase (aroG), found in Haemophilus influenzae (strain ATCC 51907 / DSM 11121 / KW20 / Rd).